We begin with the raw amino-acid sequence, 211 residues long: Uracil phosphoribosyltransferase (211 aa).

Residues R78, R103, and 130–138 (DPMLATGGT) each bind 5-phospho-alpha-D-ribose 1-diphosphate. Uracil-binding positions include I196 and 201–203 (GDA). D202 is a 5-phospho-alpha-D-ribose 1-diphosphate binding site.

The protein belongs to the UPRTase family. The cofactor is Mg(2+).

It carries out the reaction UMP + diphosphate = 5-phospho-alpha-D-ribose 1-diphosphate + uracil. The protein operates within pyrimidine metabolism; UMP biosynthesis via salvage pathway; UMP from uracil: step 1/1. Allosterically activated by GTP. Catalyzes the conversion of uracil and 5-phospho-alpha-D-ribose 1-diphosphate (PRPP) to UMP and diphosphate. The chain is Uracil phosphoribosyltransferase from Kineococcus radiotolerans (strain ATCC BAA-149 / DSM 14245 / SRS30216).